The following is a 787-amino-acid chain: MIADGSEDEEKWLAAGAAAFKQNAFYMQRAIDSNNLKDALKYSAQMLSELRTSKLSPHKYYDLYMRAFDELRKLEIFFMEETRRGCSVIELYELVQHAGNILPRLYLLCTAGSVYIKTKEAPAKEILKDLVEMCRGIQHPLRGLFLRSYLAQISRDKLPDIGSEYEGDADTVIDAVEFVLLNFTEMNKLWVRMQHQGPAREKERREKERGELRDLVGKNLHVLSQLEGVDLDMYRDTVLPRVLEQIVNCRDEIAQYYLIDCIIQVFPDEYHLQTLDVLLGACPQLQASVDIMTVLSRLMERLSNYAALNAEVLPYFLQVEAFSKLNNAIGKVIEAQEDMPILSAVTLYSSLLKFTLHVHPDRLDYADQVLGSCVKQLSGKGKIDDTRATKELVSLLSAPLEKYNDVVTALKLTNYPLVVEYLDTETKRIMATVIVRSIMKNNTLITTAEKVEALFELIKGIINDLDEPQGLEVDEDDFQEEQNSVALLIHMLYNDDPEEMFKIVNVLKKHFLTGGPKRLKFTIPPLVVSTLKLIRRLPVEGDNPFGKEASVTATKIFQFLNQIIEALPNVPSPDLAFRLYLQCAEAADKCDEEPIAYEFFTQAYILYEEEISDSKAQVTALQLIIGTLQRMQVFGVENRDTLTHKATGYAAKLLKKPDQCRAVYACSHLFWLEDRETIQDGERVLLCLKRALKIANSAQQVANTARGSTGSVTLFIEILNKYLYFYEKGVPQITVESVESLIKLIKNEESMPSDPSAESFFATTLEFMEFQKQKEGAIGERYQAIKV.

Met1 bears the N-acetylmethionine mark.

The protein belongs to the VPS35 family. As to quaternary structure, component of the retromer complex which consists of VPS29 (MAG1), VPS26 (VPS26A or VPS26B), VPS35 (VPS35A or VPS35B or VPS35C), VPS5/17 (SNX1 or SNX2A or SNX2B). Component of a retromer subcomplex consisting of VPS29 (MAG1), VPS26 (VPS26A or VPS26B), VPS35 (VPS35A or VPS35B or VPS35C). Interacts with RABG3F.

The protein localises to the cytoplasm. It is found in the endosome membrane. The protein resides in the prevacuolar compartment membrane. It localises to the golgi apparatus. Its subcellular location is the trans-Golgi network membrane. Plays a role in vesicular protein sorting. Component of the membrane-associated retromer complex which is essential in endosome-to-Golgi retrograde transport. Also involved in the efficient sorting of seed storage proteins. Binds alone to endosomal membranes and is required for recruitment of VPS26 and VPS29 to membrane. The VPS29-VPS26-VPS35 subcomplex may be involved in recycling of specific cargos from endosome to the plasma membrane. This chain is Vacuolar protein sorting-associated protein 35A (VPS35A), found in Arabidopsis thaliana (Mouse-ear cress).